The primary structure comprises 875 residues: Probable ubiquitin carboxyl-terminal hydrolase 7 (875 aa).

A UBP-type zinc finger spans residues 54–167 (KECSHLKKGV…RDVQQFICSN (114 aa)). Zn(2+)-binding residues include cysteine 56, histidine 58, cysteine 83, cysteine 86, cysteine 101, cysteine 104, cysteine 109, histidine 116, histidine 120, histidine 127, cysteine 140, and cysteine 143. Residues 208-875 (PGLKNLGATC…EAYMLFYERV (668 aa)) enclose the USP domain. The active-site Nucleophile is cysteine 217. Phosphoserine is present on residues serine 333 and serine 337. A disordered region spans residues 396–486 (YSKELSQSSD…ASPKKEVLKS (91 aa)). The segment covering 401–438 (SQSSDSSQHQHDSFLPANSSPLAASSTKSLPSSELLDS) has biased composition (low complexity). A compositionally biased stretch (basic and acidic residues) spans 473 to 484 (NHEEASPKKEVL). Phosphoserine occurs at positions 486 and 493. A compositionally biased stretch (basic residues) spans 575–586 (RSRFSRSPKKSS). The tract at residues 575 to 628 (RSRFSRSPKKSSVKIVVDNANDDTDQAPTTNSSSLNENLLGGHASENDKSLKQS) is disordered. A compositionally biased stretch (polar residues) spans 600–611 (QAPTTNSSSLNE). Serine 645 is modified (phosphoserine). Histidine 812 functions as the Proton acceptor in the catalytic mechanism.

It belongs to the peptidase C19 family.

The enzyme catalyses Thiol-dependent hydrolysis of ester, thioester, amide, peptide and isopeptide bonds formed by the C-terminal Gly of ubiquitin (a 76-residue protein attached to proteins as an intracellular targeting signal).. The polypeptide is Probable ubiquitin carboxyl-terminal hydrolase 7 (ubp7) (Schizosaccharomyces pombe (strain 972 / ATCC 24843) (Fission yeast)).